A 377-amino-acid polypeptide reads, in one-letter code: Succinyl-diaminopimelate desuccinylase (377 aa).

His-66 provides a ligand contact to Zn(2+). Asp-68 is an active-site residue. Asp-99 serves as a coordination point for Zn(2+). Catalysis depends on Glu-133, which acts as the Proton acceptor. Residues Glu-134, Glu-162, and His-348 each coordinate Zn(2+).

This sequence belongs to the peptidase M20A family. DapE subfamily. Homodimer. Requires Zn(2+) as cofactor. The cofactor is Co(2+).

It catalyses the reaction N-succinyl-(2S,6S)-2,6-diaminopimelate + H2O = (2S,6S)-2,6-diaminopimelate + succinate. Its pathway is amino-acid biosynthesis; L-lysine biosynthesis via DAP pathway; LL-2,6-diaminopimelate from (S)-tetrahydrodipicolinate (succinylase route): step 3/3. Its function is as follows. Catalyzes the hydrolysis of N-succinyl-L,L-diaminopimelic acid (SDAP), forming succinate and LL-2,6-diaminopimelate (DAP), an intermediate involved in the bacterial biosynthesis of lysine and meso-diaminopimelic acid, an essential component of bacterial cell walls. This Xylella fastidiosa (strain M23) protein is Succinyl-diaminopimelate desuccinylase.